The sequence spans 256 residues: Fibroblast growth factor 3 (256 aa).

An N-terminal signal peptide occupies residues 1-18 (MVIILLLLLLSFLDPSLE). 3 disordered regions span residues 31 to 54 (APCA…GGVY), 151 to 176 (RHHA…SSKR), and 219 to 256 (LRES…RADI). Residues 238 to 256 (ERRRRRHRGSKGHNRRADI) are compositionally biased toward basic residues.

Belongs to the heparin-binding growth factors family.

The protein resides in the secreted. Functionally, plays an important role in the regulation of embryonic development, cell proliferation, and cell differentiation. In Danio rerio (Zebrafish), this protein is Fibroblast growth factor 3 (fgf3).